A 164-amino-acid chain; its full sequence is Transcription elongation factor GreA (164 aa).

Positions 50-75 (YHAAREEQGQQEARIRQLQDLLNIAK) form a coiled coil.

The protein belongs to the GreA/GreB family.

Its function is as follows. Necessary for efficient RNA polymerase transcription elongation past template-encoded arresting sites. The arresting sites in DNA have the property of trapping a certain fraction of elongating RNA polymerases that pass through, resulting in locked ternary complexes. Cleavage of the nascent transcript by cleavage factors such as GreA or GreB allows the resumption of elongation from the new 3'terminus. GreA releases sequences of 2 to 3 nucleotides. This is Transcription elongation factor GreA from Mycobacterium leprae (strain Br4923).